Reading from the N-terminus, the 541-residue chain is Chaperonin GroEL (541 aa).

ATP is bound by residues Thr29–Pro32, Asp86–Thr90, Gly413, Asn476–Ala478, and Asp492.

The protein belongs to the chaperonin (HSP60) family. Forms a cylinder of 14 subunits composed of two heptameric rings stacked back-to-back. Interacts with the co-chaperonin GroES.

It is found in the cytoplasm. It catalyses the reaction ATP + H2O + a folded polypeptide = ADP + phosphate + an unfolded polypeptide.. Its function is as follows. Together with its co-chaperonin GroES, plays an essential role in assisting protein folding. The GroEL-GroES system forms a nano-cage that allows encapsulation of the non-native substrate proteins and provides a physical environment optimized to promote and accelerate protein folding. This Streptococcus equi subsp. zooepidemicus (strain MGCS10565) protein is Chaperonin GroEL.